Here is a 124-residue protein sequence, read N- to C-terminus: Ribonuclease pancreatic (124 aa).

Residues 1-13 (KESAAAKFERQHM) show a composition bias toward basic and acidic residues. The disordered stretch occupies residues 1 to 24 (KESAAAKFERQHMDSSTSSASSSN). The substrate site is built by Lys7 and Arg10. The active-site Proton acceptor is the His12. Intrachain disulfides connect Cys26–Cys84, Cys40–Cys95, Cys58–Cys110, and Cys65–Cys72. Asn34 carries an N-linked (GlcNAc...) asparagine; partial glycan. Substrate is bound by residues 41-45 (KPVNT), Lys66, and Arg85. The Proton donor role is filled by His119.

The protein belongs to the pancreatic ribonuclease family. In terms of assembly, monomer. Interacts with and forms tight 1:1 complexes with RNH1. Dimerization of two such complexes may occur. Interaction with RNH1 inhibits this protein. Pancreas.

The protein resides in the secreted. The enzyme catalyses an [RNA] containing cytidine + H2O = an [RNA]-3'-cytidine-3'-phosphate + a 5'-hydroxy-ribonucleotide-3'-[RNA].. It carries out the reaction an [RNA] containing uridine + H2O = an [RNA]-3'-uridine-3'-phosphate + a 5'-hydroxy-ribonucleotide-3'-[RNA].. Endonuclease that catalyzes the cleavage of RNA on the 3' side of pyrimidine nucleotides. Acts on single-stranded and double-stranded RNA. This is Ribonuclease pancreatic (RNASE1) from Aepyceros melampus (Impala).